We begin with the raw amino-acid sequence, 217 residues long: Adenylate kinase (217 aa).

Residue 10–15 (GAGKGT) coordinates ATP. Residues 30 to 59 (STGDIFRANIKNNTELGAKAKEYMDQGLLV) are NMP. AMP-binding positions include threonine 31, arginine 36, 57 to 59 (LLV), 85 to 88 (GFPR), and glutamine 92. Residues 126–163 (GRRACVSCGGTYHVVFTPTKKEGICDACGGELTIRDDD) are LID. Arginine 127 is a binding site for ATP. Zn(2+)-binding residues include cysteine 130 and cysteine 133. Residue 136-137 (TY) participates in ATP binding. Residues cysteine 150 and cysteine 153 each coordinate Zn(2+). The AMP site is built by arginine 160 and arginine 171. Lysine 199 lines the ATP pocket.

This sequence belongs to the adenylate kinase family. As to quaternary structure, monomer.

The protein resides in the cytoplasm. The catalysed reaction is AMP + ATP = 2 ADP. The protein operates within purine metabolism; AMP biosynthesis via salvage pathway; AMP from ADP: step 1/1. Its function is as follows. Catalyzes the reversible transfer of the terminal phosphate group between ATP and AMP. Plays an important role in cellular energy homeostasis and in adenine nucleotide metabolism. The protein is Adenylate kinase of Lachnoclostridium phytofermentans (strain ATCC 700394 / DSM 18823 / ISDg) (Clostridium phytofermentans).